The chain runs to 307 residues: Ras-related protein Rab-33 (307 aa).

The disordered stretch occupies residues 19-80; sequence VIDPPKHVTA…IPPAPEAVTA (62 aa). Pro residues-rich tracts occupy residues 42 to 56 and 65 to 75; these read PTHPSAPQDPSPAVP and PTAPPPIPPAP. Residue 107–114 coordinates GTP; the sequence is GNAAVGKT. Residues 129 to 137 carry the Effector region motif; sequence TEATIGVDF. GTP-binding positions include 155–159 and 217–220; these read DTAGQ and NKCD. S-geranylgeranyl cysteine attachment occurs at residues Cys-306 and Cys-307.

It belongs to the small GTPase superfamily. Rab family.

Its subcellular location is the cell membrane. The polypeptide is Ras-related protein Rab-33 (rab-33) (Caenorhabditis elegans).